The sequence spans 109 residues: Nascent polypeptide-associated complex protein (109 aa).

Positions 3-70 constitute an NAC-A/B domain; that stretch reads PMNPKQMKKM…YEVVKRPPKI (68 aa).

The protein belongs to the NAC-alpha family. As to quaternary structure, homodimer. Interacts with the ribosome. Binds ribosomal RNA.

In terms of biological role, contacts the emerging nascent chain on the ribosome. This chain is Nascent polypeptide-associated complex protein, found in Archaeoglobus fulgidus (strain ATCC 49558 / DSM 4304 / JCM 9628 / NBRC 100126 / VC-16).